Reading from the N-terminus, the 107-residue chain is UPF0060 membrane protein RPD_3084 (107 aa).

A run of 4 helical transmembrane segments spans residues 5–25, 31–51, 59–79, and 85–105; these read IIYV…WGWL, VWWL…LTLV, AYAS…WSVE, and RWDV…LWGP.

The protein belongs to the UPF0060 family.

The protein localises to the cell inner membrane. This Rhodopseudomonas palustris (strain BisB5) protein is UPF0060 membrane protein RPD_3084.